The primary structure comprises 240 residues: Phosphoribosylaminoimidazole-succinocarboxamide synthase (240 aa).

It belongs to the SAICAR synthetase family.

It catalyses the reaction 5-amino-1-(5-phospho-D-ribosyl)imidazole-4-carboxylate + L-aspartate + ATP = (2S)-2-[5-amino-1-(5-phospho-beta-D-ribosyl)imidazole-4-carboxamido]succinate + ADP + phosphate + 2 H(+). It participates in purine metabolism; IMP biosynthesis via de novo pathway; 5-amino-1-(5-phospho-D-ribosyl)imidazole-4-carboxamide from 5-amino-1-(5-phospho-D-ribosyl)imidazole-4-carboxylate: step 1/2. In Acidithiobacillus ferrooxidans (strain ATCC 23270 / DSM 14882 / CIP 104768 / NCIMB 8455) (Ferrobacillus ferrooxidans (strain ATCC 23270)), this protein is Phosphoribosylaminoimidazole-succinocarboxamide synthase.